The following is a 179-amino-acid chain: Bifunctional protein PyrR (179 aa).

Positions 99–111 (VILIDDVLYTGRT) match the PRPP-binding motif.

The protein belongs to the purine/pyrimidine phosphoribosyltransferase family. PyrR subfamily. In terms of assembly, homodimer and homohexamer; in equilibrium.

The enzyme catalyses UMP + diphosphate = 5-phospho-alpha-D-ribose 1-diphosphate + uracil. Regulates transcriptional attenuation of the pyrimidine nucleotide (pyr) operon by binding in a uridine-dependent manner to specific sites on pyr mRNA. This disrupts an antiterminator hairpin in the RNA and favors formation of a downstream transcription terminator, leading to a reduced expression of downstream genes. Functionally, also displays a weak uracil phosphoribosyltransferase activity which is not physiologically significant. In Latilactobacillus sakei subsp. sakei (strain 23K) (Lactobacillus sakei subsp. sakei), this protein is Bifunctional protein PyrR.